The chain runs to 151 residues: Small ribosomal subunit protein uS13 (151 aa).

Residues 131–151 (RGQRTKSSFRRGRTVGVKKKQ) form a disordered region. Residues 133–151 (QRTKSSFRRGRTVGVKKKQ) are compositionally biased toward basic residues.

Belongs to the universal ribosomal protein uS13 family. As to quaternary structure, part of the 30S ribosomal subunit. Forms a loose heterodimer with protein S19. Forms two bridges to the 50S subunit in the 70S ribosome.

Functionally, located at the top of the head of the 30S subunit, it contacts several helices of the 16S rRNA. In the 70S ribosome it contacts the 23S rRNA (bridge B1a) and protein L5 of the 50S subunit (bridge B1b), connecting the 2 subunits; these bridges are implicated in subunit movement. This Methanopyrus kandleri (strain AV19 / DSM 6324 / JCM 9639 / NBRC 100938) protein is Small ribosomal subunit protein uS13.